The following is a 180-amino-acid chain: Large ribosomal subunit protein uL15 (180 aa).

The tract at residues 1 to 62 (MKKERLEQAS…KTAGRGSKGQ (62 aa)) is disordered.

Belongs to the universal ribosomal protein uL15 family. As to quaternary structure, part of the 50S ribosomal subunit.

In terms of biological role, binds to the 23S rRNA. The sequence is that of Large ribosomal subunit protein uL15 from Leptospira interrogans serogroup Icterohaemorrhagiae serovar copenhageni (strain Fiocruz L1-130).